Here is a 564-residue protein sequence, read N- to C-terminus: Threonine--tRNA ligase (564 aa).

The interval 167 to 464 (DHRSLGKQLE…LLEKTSGNFP (298 aa)) is catalytic. 3 residues coordinate Zn(2+): C260, H311, and H441.

It belongs to the class-II aminoacyl-tRNA synthetase family. As to quaternary structure, homodimer. It depends on Zn(2+) as a cofactor.

The protein localises to the cytoplasm. The enzyme catalyses tRNA(Thr) + L-threonine + ATP = L-threonyl-tRNA(Thr) + AMP + diphosphate + H(+). Catalyzes the attachment of threonine to tRNA(Thr) in a two-step reaction: L-threonine is first activated by ATP to form Thr-AMP and then transferred to the acceptor end of tRNA(Thr). Also edits incorrectly charged L-seryl-tRNA(Thr). This chain is Threonine--tRNA ligase, found in Mycoplasma genitalium (strain ATCC 33530 / DSM 19775 / NCTC 10195 / G37) (Mycoplasmoides genitalium).